The following is a 392-amino-acid chain: Probable protein phosphatase 2C 29 (392 aa).

The region spanning 44–353 (DYSVAVAQAN…DDITVVVLFL (310 aa)) is the PPM-type phosphatase domain. 4 residues coordinate Mn(2+): D75, G76, D285, and D344. The interval 360–392 (AGRGDEIDGTDGPVDVFSLSPDDREDPTRPVLR) is disordered.

It belongs to the PP2C family. Mg(2+) serves as cofactor. Requires Mn(2+) as cofactor.

The enzyme catalyses O-phospho-L-seryl-[protein] + H2O = L-seryl-[protein] + phosphate. It catalyses the reaction O-phospho-L-threonyl-[protein] + H2O = L-threonyl-[protein] + phosphate. This is Probable protein phosphatase 2C 29 from Oryza sativa subsp. japonica (Rice).